Reading from the N-terminus, the 190-residue chain is Threonylcarbamoyl-AMP synthase (190 aa).

Residues 8 to 190 (RFRIRQCAAR…DAESGAVIRA (183 aa)) enclose the YrdC-like domain.

It belongs to the SUA5 family. TsaC subfamily.

It is found in the cytoplasm. It catalyses the reaction L-threonine + hydrogencarbonate + ATP = L-threonylcarbamoyladenylate + diphosphate + H2O. In terms of biological role, required for the formation of a threonylcarbamoyl group on adenosine at position 37 (t(6)A37) in tRNAs that read codons beginning with adenine. Catalyzes the conversion of L-threonine, HCO(3)(-)/CO(2) and ATP to give threonylcarbamoyl-AMP (TC-AMP) as the acyladenylate intermediate, with the release of diphosphate. In Alkalilimnicola ehrlichii (strain ATCC BAA-1101 / DSM 17681 / MLHE-1), this protein is Threonylcarbamoyl-AMP synthase.